The chain runs to 550 residues: CTP synthase (550 aa).

The amidoligase domain stretch occupies residues 1–270; sequence MTKFVFVTGG…DRLICEELRL (270 aa). A CTP-binding site is contributed by serine 13. A UTP-binding site is contributed by serine 13. ATP-binding positions include 14–19 and aspartate 71; that span reads SLGKGI. 2 residues coordinate Mg(2+): aspartate 71 and glutamate 144. Residues 151–153, 191–196, and lysine 227 each bind CTP; these read DIE and KTKPTQ. UTP is bound by residues 191–196 and lysine 227; that span reads KTKPTQ. In terms of domain architecture, Glutamine amidotransferase type-1 spans 295–547; sequence TIGMVGKYVD…VEAALASQQR (253 aa). Glycine 356 provides a ligand contact to L-glutamine. The active-site Nucleophile; for glutamine hydrolysis is the cysteine 383. L-glutamine-binding positions include 384 to 387, glutamate 407, and arginine 473; that span reads LGMQ. Residues histidine 520 and glutamate 522 contribute to the active site.

It belongs to the CTP synthase family. In terms of assembly, homotetramer.

It carries out the reaction UTP + L-glutamine + ATP + H2O = CTP + L-glutamate + ADP + phosphate + 2 H(+). The enzyme catalyses L-glutamine + H2O = L-glutamate + NH4(+). The catalysed reaction is UTP + NH4(+) + ATP = CTP + ADP + phosphate + 2 H(+). It participates in pyrimidine metabolism; CTP biosynthesis via de novo pathway; CTP from UDP: step 2/2. Allosterically activated by GTP, when glutamine is the substrate; GTP has no effect on the reaction when ammonia is the substrate. The allosteric effector GTP functions by stabilizing the protein conformation that binds the tetrahedral intermediate(s) formed during glutamine hydrolysis. Inhibited by the product CTP, via allosteric rather than competitive inhibition. Catalyzes the ATP-dependent amination of UTP to CTP with either L-glutamine or ammonia as the source of nitrogen. Regulates intracellular CTP levels through interactions with the four ribonucleotide triphosphates. This chain is CTP synthase, found in Cupriavidus necator (strain ATCC 17699 / DSM 428 / KCTC 22496 / NCIMB 10442 / H16 / Stanier 337) (Ralstonia eutropha).